The chain runs to 150 residues: Large ribosomal subunit protein bL9 (150 aa).

This sequence belongs to the bacterial ribosomal protein bL9 family.

Its function is as follows. Binds to the 23S rRNA. This is Large ribosomal subunit protein bL9 from Enterococcus faecalis (strain ATCC 700802 / V583).